A 140-amino-acid polypeptide reads, in one-letter code: Large ribosomal subunit protein uL11 (140 aa).

Belongs to the universal ribosomal protein uL11 family. Part of the ribosomal stalk of the 50S ribosomal subunit. Interacts with L10 and the large rRNA to form the base of the stalk. L10 forms an elongated spine to which L12 dimers bind in a sequential fashion forming a multimeric L10(L12)X complex. One or more lysine residues are methylated.

Its function is as follows. Forms part of the ribosomal stalk which helps the ribosome interact with GTP-bound translation factors. This Geobacter sp. (strain M21) protein is Large ribosomal subunit protein uL11.